We begin with the raw amino-acid sequence, 87 residues long: uncharacterized protein (87 aa).

The signal sequence occupies residues 1-23; that stretch reads MAVSVLRLTVVLGLLVLFLTCYA. The segment at 24–44 is disordered; it reads DDKPDKPDDKPDDSGKDPKPD.

It is found in the secreted. This is an uncharacterized protein from Homo sapiens (Human).